Here is a 707-residue protein sequence, read N- to C-terminus: Polyribonucleotide nucleotidyltransferase (707 aa).

D491 and D497 together coordinate Mg(2+). One can recognise a KH domain in the interval 558-617; it reads PRIEKIKIHPDKIGLLIGPGGKTIKKISAESGAEITIEDDGTVMIYSSSADSLEAAREMI. Residues 622 to 695 enclose the S1 motif domain; the sequence is GEVTVGGIYR…EKGRYKFSRK (74 aa).

This sequence belongs to the polyribonucleotide nucleotidyltransferase family. The cofactor is Mg(2+).

The protein resides in the cytoplasm. It catalyses the reaction RNA(n+1) + phosphate = RNA(n) + a ribonucleoside 5'-diphosphate. Its function is as follows. Involved in mRNA degradation. Catalyzes the phosphorolysis of single-stranded polyribonucleotides processively in the 3'- to 5'-direction. The chain is Polyribonucleotide nucleotidyltransferase from Methylacidiphilum infernorum (isolate V4) (Methylokorus infernorum (strain V4)).